The sequence spans 89 residues: Small ribosomal subunit protein uS15 (89 aa).

Belongs to the universal ribosomal protein uS15 family. Part of the 30S ribosomal subunit. Forms a bridge to the 50S subunit in the 70S ribosome, contacting the 23S rRNA.

One of the primary rRNA binding proteins, it binds directly to 16S rRNA where it helps nucleate assembly of the platform of the 30S subunit by binding and bridging several RNA helices of the 16S rRNA. In terms of biological role, forms an intersubunit bridge (bridge B4) with the 23S rRNA of the 50S subunit in the ribosome. The chain is Small ribosomal subunit protein uS15 from Synechococcus elongatus (strain ATCC 33912 / PCC 7942 / FACHB-805) (Anacystis nidulans R2).